A 1100-amino-acid chain; its full sequence is DNA-directed RNA polymerase subunit beta (1100 aa).

The interval 1064–1100 (YEEDKEVDLMADVNQRRTPSRPTYESMSVGDIDDDDD) is disordered. Residues 1079-1089 (RRTPSRPTYES) show a composition bias toward polar residues.

The protein belongs to the RNA polymerase beta chain family. In cyanobacteria the RNAP catalytic core is composed of 2 alpha, 1 beta, 1 beta', 1 gamma and 1 omega subunit. When a sigma factor is associated with the core the holoenzyme is formed, which can initiate transcription.

It carries out the reaction RNA(n) + a ribonucleoside 5'-triphosphate = RNA(n+1) + diphosphate. Functionally, DNA-dependent RNA polymerase catalyzes the transcription of DNA into RNA using the four ribonucleoside triphosphates as substrates. The sequence is that of DNA-directed RNA polymerase subunit beta from Synechococcus elongatus (strain ATCC 33912 / PCC 7942 / FACHB-805) (Anacystis nidulans R2).